A 682-amino-acid chain; its full sequence is Serine/threonine-protein kinase PAK 6 (682 aa).

4 disordered regions span residues 1–30 (MFRK…DPKE), 132–170 (SPQS…QALP), 200–256 (LQSS…QESS), and 270–367 (PATG…NLYL). The region spanning 12 to 25 (ISAPQNFQHRVHTS) is the CRIB domain. Residues 26–407 (FDPKEGKFVG…VVDQGDPRLL (382 aa)) form a linker region. 2 stretches are compositionally biased toward polar residues: residues 270 to 279 (PATGAASSSK) and 297 to 334 (KDSS…QKSL). One can recognise a Protein kinase domain in the interval 408 to 659 (LDSYVKIGEG…AQELLDHPFL (252 aa)). ATP is bound by residues 414–422 (IGEGSTGIV) and K437. The active-site Proton acceptor is D527. S561 is modified (phosphoserine; by autocatalysis).

The protein belongs to the protein kinase superfamily. STE Ser/Thr protein kinase family. STE20 subfamily. As to quaternary structure, interacts tightly with GTP-bound but not GDP-bound CDC42/p21 and RAC1. Interacts with the androgen receptor AR. Interacts with IQGAP1 and PPM1B. Post-translationally, autophosphorylated. Phosphorylated by MAP2K6/MAPKK6, leading to PAK6 activation.

It is found in the cytoplasm. Its subcellular location is the nucleus. It catalyses the reaction L-seryl-[protein] + ATP = O-phospho-L-seryl-[protein] + ADP + H(+). It carries out the reaction L-threonyl-[protein] + ATP = O-phospho-L-threonyl-[protein] + ADP + H(+). Functionally, serine/threonine protein kinase that plays a role in the regulation of gene transcription. The kinase activity is induced by various effectors including AR or MAP2K6/MAPKK6. Phosphorylates the DNA-binding domain of androgen receptor/AR and thereby inhibits AR-mediated transcription. Also inhibits ESR1-mediated transcription. May play a role in cytoskeleton regulation by interacting with IQGAP1. May protect cells from apoptosis through phosphorylation of BAD. The protein is Serine/threonine-protein kinase PAK 6 (Pak6) of Mus musculus (Mouse).